Consider the following 365-residue polypeptide: Zinc transporter 7 (365 aa).

A signal peptide spans Met1–Ala26. Topologically, residues Gly27–Lys56 are extracellular. A helical membrane pass occupies residues Ile57–Ser77. The Cytoplasmic portion of the chain corresponds to Arg78–Ser90. The helical transmembrane segment at Val91–Pro111 threads the bilayer. Over Asp112 to Lys129 the chain is Extracellular. A helical transmembrane segment spans residues Phe130–Phe150. Topologically, residues Ala151–Lys210 are cytoplasmic. A helical transmembrane segment spans residues Val211 to Met231. Residues Gly232–Ser242 lie on the Extracellular side of the membrane. The helical transmembrane segment at Leu243–Leu263 threads the bilayer. The Cytoplasmic segment spans residues Gln264 to Asn272. The helical transmembrane segment at Trp273 to Ile293 threads the bilayer. At Gln294–Ala304 the chain is on the extracellular side. The helical transmembrane segment at Leu305–Val325 threads the bilayer. The Cytoplasmic segment spans residues Asn326–His344. A helical transmembrane segment spans residues Val345–Ala365.

The protein belongs to the ZIP transporter (TC 2.A.5) family.

Its subcellular location is the cell membrane. Functionally, probably mediates zinc uptake from the rhizosphere. The sequence is that of Zinc transporter 7 (ZIP7) from Arabidopsis thaliana (Mouse-ear cress).